The sequence spans 184 residues: Cytidylate kinase (184 aa).

Residue 8-16 coordinates ATP; that stretch reads GQPGSGKTT.

Belongs to the cytidylate kinase family. Type 2 subfamily.

The protein resides in the cytoplasm. It carries out the reaction CMP + ATP = CDP + ADP. The enzyme catalyses dCMP + ATP = dCDP + ADP. The chain is Cytidylate kinase from Pyrobaculum arsenaticum (strain DSM 13514 / JCM 11321 / PZ6).